The chain runs to 339 residues: tRNA N6-adenosine threonylcarbamoyltransferase (339 aa).

2 residues coordinate Fe cation: His111 and His115. Substrate is bound by residues 134-138 (LVSGG), Asp167, Gly180, and Asn272. Asp300 is a Fe cation binding site.

It belongs to the KAE1 / TsaD family. Requires Fe(2+) as cofactor.

It localises to the cytoplasm. The enzyme catalyses L-threonylcarbamoyladenylate + adenosine(37) in tRNA = N(6)-L-threonylcarbamoyladenosine(37) in tRNA + AMP + H(+). Required for the formation of a threonylcarbamoyl group on adenosine at position 37 (t(6)A37) in tRNAs that read codons beginning with adenine. Is involved in the transfer of the threonylcarbamoyl moiety of threonylcarbamoyl-AMP (TC-AMP) to the N6 group of A37, together with TsaE and TsaB. TsaD likely plays a direct catalytic role in this reaction. The sequence is that of tRNA N6-adenosine threonylcarbamoyltransferase from Sodalis glossinidius (strain morsitans).